Reading from the N-terminus, the 575-residue chain is Polyprotein P2A (575 aa).

3 helical membrane-spanning segments follow: residues 10–30, 36–56, and 74–96; these read FLITLANVICAAILFDIHTGG, LIPIVAWMTPFVTLLWLSASF, and VARVYYTAQSAPYFDPALGVMMQ. One can recognise a Peptidase S39 domain in the interval 135–335; it reads VLGSFYSSVK…TLPPELSVIE (201 aa). Catalysis depends on for protease activity residues H181, D216, and S284. Residues 513-575 are disordered; sequence KTSLSATPPP…QPTKTSLRGI (63 aa). The segment covering 541–553 has biased composition (basic residues); it reads KSARRRNRRKSTR. Over residues 558–575 the composition is skewed to polar residues; sequence ESPSPASPQPTKTSLRGI.

Post-translationally, the polyprotein is proteolytically cleaved into several chains by the viral protease.

Its subcellular location is the host membrane. Functionally, responsible for cleavages of polyprotein P2A and replicase polyprotein P2AB. In terms of biological role, covalently attached to the 5' extremity of the genomic and subgenomic RNAs. It may serve as a primer for the replicase. The protein is Polyprotein P2A of Southern bean mosaic virus (isolate Bean/United States/Arkansas) (SBMV).